Here is a 362-residue protein sequence, read N- to C-terminus: Probable dual-specificity RNA methyltransferase RlmN (362 aa).

Glu-105 functions as the Proton acceptor in the catalytic mechanism. Residues 111–344 (HEYGNSICVT…VTIRREQGHD (234 aa)) form the Radical SAM core domain. Cys-118 and Cys-349 are joined by a disulfide. 3 residues coordinate [4Fe-4S] cluster: Cys-125, Cys-129, and Cys-132. Residues 175-176 (GE), Ser-207, 230-232 (SLH), and Asn-306 each bind S-adenosyl-L-methionine. Cys-349 acts as the S-methylcysteine intermediate in catalysis.

This sequence belongs to the radical SAM superfamily. RlmN family. The cofactor is [4Fe-4S] cluster.

The protein localises to the cytoplasm. It catalyses the reaction adenosine(2503) in 23S rRNA + 2 reduced [2Fe-2S]-[ferredoxin] + 2 S-adenosyl-L-methionine = 2-methyladenosine(2503) in 23S rRNA + 5'-deoxyadenosine + L-methionine + 2 oxidized [2Fe-2S]-[ferredoxin] + S-adenosyl-L-homocysteine. The enzyme catalyses adenosine(37) in tRNA + 2 reduced [2Fe-2S]-[ferredoxin] + 2 S-adenosyl-L-methionine = 2-methyladenosine(37) in tRNA + 5'-deoxyadenosine + L-methionine + 2 oxidized [2Fe-2S]-[ferredoxin] + S-adenosyl-L-homocysteine. Functionally, specifically methylates position 2 of adenine 2503 in 23S rRNA and position 2 of adenine 37 in tRNAs. The polypeptide is Probable dual-specificity RNA methyltransferase RlmN (Bacillus cereus (strain G9842)).